The chain runs to 463 residues: Trigger factor (463 aa).

In terms of domain architecture, PPIase FKBP-type spans 162–243 (GDHVSIDLSA…VHSVKLKELP (82 aa)). Positions 427-444 (SGNTIEPPTPVHTETITV) are enriched in polar residues. The tract at residues 427-463 (SGNTIEPPTPVHTETITVASGDEETEESAAEQGETEK) is disordered.

It belongs to the FKBP-type PPIase family. Tig subfamily.

It localises to the cytoplasm. The catalysed reaction is [protein]-peptidylproline (omega=180) = [protein]-peptidylproline (omega=0). Involved in protein export. Acts as a chaperone by maintaining the newly synthesized protein in an open conformation. Functions as a peptidyl-prolyl cis-trans isomerase. The polypeptide is Trigger factor (Thermobifida fusca (strain YX)).